The sequence spans 382 residues: MVRKLGIEEELLLFDPESGEVVPAAPSVLKEFREHGPGRQRARAATDELDQELFRHQLETRTDPVRRAADALDQLVAARRTAGEAARAAGYAAGACGIVPLGGDRSVVSPNDRYRDMVDTYGEIARTGGTCGMHVHVDIGSDEEGVAVVDRIAPWLPVLVALAANSPYVEGRDSGYASWRAQVWARWPSAGPTEQFGSVAGYREVCRMLLDVGAARDPGMLYFDARLSTGQPTVEVRVCDVGTDPAVAVTIGALVRALVETAAEEWADGRPAAHWRAEALRAAHWRASRFGMADSLVHPLARGLRPARSVVAALVEAVEPALAAAGDLELVDVQLERAVNDNGATRQRAAFERTGSVRGVVDDVIARTEASWQDHDSHAGRL.

The protein belongs to the glutamate--cysteine ligase type 2 family. YbdK subfamily.

It catalyses the reaction L-cysteine + L-glutamate + ATP = gamma-L-glutamyl-L-cysteine + ADP + phosphate + H(+). Functionally, ATP-dependent carboxylate-amine ligase which exhibits weak glutamate--cysteine ligase activity. The protein is Putative glutamate--cysteine ligase 2-1 of Nocardioides sp. (strain ATCC BAA-499 / JS614).